A 270-amino-acid chain; its full sequence is Sulfur carrier protein FdhD (270 aa).

C108 (cysteine persulfide intermediate) is an active-site residue. 247 to 252 lines the Mo-bis(molybdopterin guanine dinucleotide) pocket; that stretch reads FIRDGR.

It belongs to the FdhD family.

It is found in the cytoplasm. Functionally, required for formate dehydrogenase (FDH) activity. Acts as a sulfur carrier protein that transfers sulfur from IscS to the molybdenum cofactor prior to its insertion into FDH. The protein is Sulfur carrier protein FdhD of Halalkalibacterium halodurans (strain ATCC BAA-125 / DSM 18197 / FERM 7344 / JCM 9153 / C-125) (Bacillus halodurans).